The primary structure comprises 128 residues: Large ribosomal subunit protein bL12 (128 aa).

The interval 97 to 128 (GAPSTLKEGVSKEDAEEAKKQLTEAGATVEVK) is disordered. Basic and acidic residues predominate over residues 105–118 (GVSKEDAEEAKKQL).

It belongs to the bacterial ribosomal protein bL12 family. Homodimer. Part of the ribosomal stalk of the 50S ribosomal subunit. Forms a multimeric L10(L12)X complex, where L10 forms an elongated spine to which 2 to 4 L12 dimers bind in a sequential fashion. Binds GTP-bound translation factors.

Its function is as follows. Forms part of the ribosomal stalk which helps the ribosome interact with GTP-bound translation factors. Is thus essential for accurate translation. This is Large ribosomal subunit protein bL12 from Lawsonia intracellularis (strain PHE/MN1-00).